Here is a 236-residue protein sequence, read N- to C-terminus: Small ribosomal subunit protein uS2c (236 aa).

This sequence belongs to the universal ribosomal protein uS2 family.

It localises to the plastid. Its subcellular location is the chloroplast. This Oenothera biennis (German evening primrose) protein is Small ribosomal subunit protein uS2c (rps2).